A 300-amino-acid chain; its full sequence is B1 kinase (300 aa).

The region spanning 16 to 282 (WVVGPLIGKG…ITMVNSLTYF (267 aa)) is the Protein kinase domain. Residues 22–30 (IGKGGFGSI) and Lys45 contribute to the ATP site. Asp147 functions as the Proton acceptor in the catalytic mechanism.

This sequence belongs to the protein kinase superfamily. Ser/Thr protein kinase family. Poxviruses subfamily. Interacts with host JIP1; this interaction increases the amount of MAPK bound to JIP1 and subsequently increases the activity of transcription factors, such as JUN, that respond to these complexes. Interacts with protein OPG198; this interaction inhibits the repressive activity of OPG198 pseudokinase on viral replication factory formation. Mg(2+) serves as cofactor. Post-translationally, autophosphorylated.

It is found in the virion. Its subcellular location is the host cytoplasm. The catalysed reaction is L-seryl-[protein] + ATP = O-phospho-L-seryl-[protein] + ADP + H(+). It catalyses the reaction L-threonyl-[protein] + ATP = O-phospho-L-threonyl-[protein] + ADP + H(+). Essential serine/threonine-protein kinase that plays different role in the viral life cycle. Phosphorylates the host small ribosomal protein RACK1 thereby customizing the ribosomes to a state optimal for viral mRNAs (which contain poly-A leaders) but not for host mRNAs. Facilitates viral DNA replication by inhibiting host BANF1, a cellular host defense responsive to foreign DNA. Phosphorylates host BANF1 on serine and threonine residues; this leads to BANF1 relocalization to the cytoplasm, loss of dimerization and impaired DNA binding activity. Indeed, BANF1 activity depends on its DNA-binding property which is blocked by VPK1-mediated phosphorylation. Required for viral intermediate genes expression, probably by inhibiting host BANF1. Modulates cellular responses via host JUN by two different mechanisms, either by direct phosphorylation or by modulation of upstream JIP1-MAPK complexes. Seems to participate in the accumulation/processing of late proteins and thus in virion maturation. In addition, inhibits B12 repressive activity on viral DNA replication via a phosphorylation-dependent mechanism. The polypeptide is B1 kinase (OPG187) (Homo sapiens (Human)).